Here is a 60-residue protein sequence, read N- to C-terminus: Large ribosomal subunit protein uL30 (60 aa).

The protein belongs to the universal ribosomal protein uL30 family. As to quaternary structure, part of the 50S ribosomal subunit.

In Amoebophilus asiaticus (strain 5a2), this protein is Large ribosomal subunit protein uL30.